We begin with the raw amino-acid sequence, 202 residues long: FMN reductase (NADH) RutF 1 (202 aa).

Residues 168 to 202 (PRTPRSGSAPAEPARAPRAVGARPAEGPALALRSA) form a disordered region. Residues 171-196 (PRSGSAPAEPARAPRAVGARPAEGPA) are compositionally biased toward low complexity.

It belongs to the non-flavoprotein flavin reductase family. RutF subfamily.

The catalysed reaction is FMNH2 + NAD(+) = FMN + NADH + 2 H(+). Functionally, catalyzes the reduction of FMN to FMNH2 which is used to reduce pyrimidine by RutA via the Rut pathway. The polypeptide is FMN reductase (NADH) RutF 1 (Methylorubrum extorquens (strain PA1) (Methylobacterium extorquens)).